The primary structure comprises 307 residues: Nicotinamide/nicotinic acid mononucleotide adenylyltransferase 2 (307 aa).

Positions 16 and 17 each coordinate NAD(+). H24 is a binding site for ATP. 2 residues coordinate NAD(+): W92 and T95. 2 S-palmitoyl cysteine lipidation sites follow: C164 and C165. The NAD(+) site is built by G200, D202, L212, W213, and R232. 271–274 (TKSR) contributes to the ATP binding site.

The protein belongs to the eukaryotic NMN adenylyltransferase family. Monomer. Requires Mg(2+) as cofactor. Degraded in response to injured neurite. Degradation is caused by polyubiquitination by MYCBP2 after recognition by FBXO45. In terms of processing, palmitoylated; palmitoylation is required for membrane association.

The protein resides in the golgi apparatus membrane. The protein localises to the cytoplasmic vesicle membrane. It localises to the cytoplasm. Its subcellular location is the cell projection. It is found in the axon. It catalyses the reaction beta-nicotinamide D-ribonucleotide + ATP + H(+) = diphosphate + NAD(+). The enzyme catalyses nicotinate beta-D-ribonucleotide + ATP + H(+) = deamido-NAD(+) + diphosphate. It participates in cofactor biosynthesis; NAD(+) biosynthesis; NAD(+) from nicotinamide D-ribonucleotide: step 1/1. It functions in the pathway cofactor biosynthesis; NAD(+) biosynthesis; deamido-NAD(+) from nicotinate D-ribonucleotide: step 1/1. Inhibited by P1-(adenosine-5')-P3-(nicotinamide-riboside-5')-triphosphate (Np3AD) and P1-(adenosine-5')-P4-(nicotinamide-riboside-5')-tetraphosphate (Np4AD). Nicotinamide/nicotinate-nucleotide adenylyltransferase that acts as an axon maintenance factor. Axon survival factor required for the maintenance of healthy axons: acts by delaying Wallerian axon degeneration, an evolutionarily conserved process that drives the loss of damaged axons. Catalyzes the formation of NAD(+) from nicotinamide mononucleotide (NMN) and ATP. Can also use the deamidated form; nicotinic acid mononucleotide (NaMN) as substrate but with a lower efficiency. Cannot use triazofurin monophosphate (TrMP) as substrate. Also catalyzes the reverse reaction, i.e. the pyrophosphorolytic cleavage of NAD(+). For the pyrophosphorolytic activity prefers NAD(+), NADH and NaAD as substrates and degrades nicotinic acid adenine dinucleotide phosphate (NHD) less effectively. Fails to cleave phosphorylated dinucleotides NADP(+), NADPH and NaADP(+). Also acts as an activator of ADP-ribosylation by supporting the catalytic activity of PARP16 and promoting mono-ADP-ribosylation of ribosomes by PARP16. May be involved in the maintenance of axonal integrity. This chain is Nicotinamide/nicotinic acid mononucleotide adenylyltransferase 2 (NMNAT2), found in Pongo abelii (Sumatran orangutan).